A 172-amino-acid chain; its full sequence is 3-hydroxydecanoyl-[acyl-carrier-protein] dehydratase (172 aa).

Residue histidine 71 is part of the active site.

The protein belongs to the thioester dehydratase family. FabA subfamily. In terms of assembly, homodimer.

It is found in the cytoplasm. The catalysed reaction is a (3R)-hydroxyacyl-[ACP] = a (2E)-enoyl-[ACP] + H2O. It catalyses the reaction (3R)-hydroxydecanoyl-[ACP] = (2E)-decenoyl-[ACP] + H2O. It carries out the reaction (2E)-decenoyl-[ACP] = (3Z)-decenoyl-[ACP]. The protein operates within lipid metabolism; fatty acid biosynthesis. Its function is as follows. Necessary for the introduction of cis unsaturation into fatty acids. Catalyzes the dehydration of (3R)-3-hydroxydecanoyl-ACP to E-(2)-decenoyl-ACP and then its isomerization to Z-(3)-decenoyl-ACP. Can catalyze the dehydratase reaction for beta-hydroxyacyl-ACPs with saturated chain lengths up to 16:0, being most active on intermediate chain length. The polypeptide is 3-hydroxydecanoyl-[acyl-carrier-protein] dehydratase (Enterobacter sp. (strain 638)).